The following is a 1068-amino-acid chain: Carbamoyl phosphate synthase large chain (1068 aa).

The segment at 1 to 401 is carboxyphosphate synthetic domain; the sequence is MPRNNDIKKV…ALMKAIRSLE (401 aa). Arg129, Arg169, Gly175, Gly176, Arg208, Ile210, Glu215, Gly241, Val242, His243, Gln284, and Glu298 together coordinate ATP. The region spanning 133 to 327 is the ATP-grasp 1 domain; sequence KDTMEKIGEP…IAKVTAKIAL (195 aa). Mg(2+) is bound by residues Gln284, Glu298, and Asn300. Positions 284, 298, and 300 each coordinate Mn(2+). The segment at 402-546 is oligomerization domain; sequence QHVDSLMSYD…YSVFGSENEA (145 aa). The carbamoyl phosphate synthetic domain stretch occupies residues 547 to 930; the sequence is AETNPQKKVL…ALYKAFEGAG (384 aa). The ATP-grasp 2 domain maps to 672–862; that stretch reads DEILQKTGIP…IVDLAARIIM (191 aa). ATP is bound by residues Arg708, Lys747, Leu749, Glu753, Gly778, Val779, His780, Ser781, Gln821, and Glu833. Residues Gln821, Glu833, and Asn835 each contribute to the Mg(2+) site. Mn(2+)-binding residues include Gln821, Glu833, and Asn835. The MGS-like domain occupies 931-1068; it reads VELPKYKQMI…PVDIATVKNL (138 aa). The tract at residues 931 to 1068 is allosteric domain; that stretch reads VELPKYKQMI…PVDIATVKNL (138 aa).

The protein belongs to the CarB family. Composed of two chains; the small (or glutamine) chain promotes the hydrolysis of glutamine to ammonia, which is used by the large (or ammonia) chain to synthesize carbamoyl phosphate. Tetramer of heterodimers (alpha,beta)4. Mg(2+) is required as a cofactor. The cofactor is Mn(2+).

It carries out the reaction hydrogencarbonate + L-glutamine + 2 ATP + H2O = carbamoyl phosphate + L-glutamate + 2 ADP + phosphate + 2 H(+). The enzyme catalyses hydrogencarbonate + NH4(+) + 2 ATP = carbamoyl phosphate + 2 ADP + phosphate + 2 H(+). Its pathway is amino-acid biosynthesis; L-arginine biosynthesis; carbamoyl phosphate from bicarbonate: step 1/1. The protein operates within pyrimidine metabolism; UMP biosynthesis via de novo pathway; (S)-dihydroorotate from bicarbonate: step 1/3. Functionally, large subunit of the glutamine-dependent carbamoyl phosphate synthetase (CPSase). CPSase catalyzes the formation of carbamoyl phosphate from the ammonia moiety of glutamine, carbonate, and phosphate donated by ATP, constituting the first step of 2 biosynthetic pathways, one leading to arginine and/or urea and the other to pyrimidine nucleotides. The large subunit (synthetase) binds the substrates ammonia (free or transferred from glutamine from the small subunit), hydrogencarbonate and ATP and carries out an ATP-coupled ligase reaction, activating hydrogencarbonate by forming carboxy phosphate which reacts with ammonia to form carbamoyl phosphate. In Agathobacter rectalis (strain ATCC 33656 / DSM 3377 / JCM 17463 / KCTC 5835 / VPI 0990) (Eubacterium rectale), this protein is Carbamoyl phosphate synthase large chain.